The chain runs to 294 residues: Glyceraldehyde-3-phosphate dehydrogenase (294 aa).

NAD(+) contacts are provided by Asp-19, Lys-63, and Thr-105. Residues 134 to 136 (SCT), Thr-165, 194 to 195 (TG), and Arg-217 contribute to the D-glyceraldehyde 3-phosphate site. Residue Cys-135 is the Nucleophile of the active site.

The protein belongs to the glyceraldehyde-3-phosphate dehydrogenase family. Homotetramer.

Its subcellular location is the cytoplasm. It catalyses the reaction D-glyceraldehyde 3-phosphate + phosphate + NAD(+) = (2R)-3-phospho-glyceroyl phosphate + NADH + H(+). The protein operates within carbohydrate degradation; glycolysis; pyruvate from D-glyceraldehyde 3-phosphate: step 1/5. Catalyzes the oxidative phosphorylation of glyceraldehyde 3-phosphate (G3P) to 1,3-bisphosphoglycerate (BPG) using the cofactor NAD. The first reaction step involves the formation of a hemiacetal intermediate between G3P and a cysteine residue, and this hemiacetal intermediate is then oxidized to a thioester, with concomitant reduction of NAD to NADH. The reduced NADH is then exchanged with the second NAD, and the thioester is attacked by a nucleophilic inorganic phosphate to produce BPG. The protein is Glyceraldehyde-3-phosphate dehydrogenase (gap) of Atlantibacter hermannii (Escherichia hermannii).